The primary structure comprises 90 residues: Probable Fe(2+)-trafficking protein (90 aa).

The protein belongs to the Fe(2+)-trafficking protein family.

In terms of biological role, could be a mediator in iron transactions between iron acquisition and iron-requiring processes, such as synthesis and/or repair of Fe-S clusters in biosynthetic enzymes. The protein is Probable Fe(2+)-trafficking protein of Dechloromonas aromatica (strain RCB).